Reading from the N-terminus, the 388-residue chain is Pepsin A-3 (388 aa).

The N-terminal stretch at Met1–Cys15 is a signal peptide. The propeptide at Ile16–Leu62 is activation peptide. The region spanning Tyr76–Ala385 is the Peptidase A1 domain. The active site involves Asp94. Disulfide bonds link Cys107–Cys112 and Cys268–Cys272. Asp277 is a catalytic residue. A disulfide bridge links Cys311 with Cys344.

Belongs to the peptidase A1 family.

The protein resides in the secreted. The catalysed reaction is Preferential cleavage: hydrophobic, preferably aromatic, residues in P1 and P1' positions. Cleaves 1-Phe-|-Val-2, 4-Gln-|-His-5, 13-Glu-|-Ala-14, 14-Ala-|-Leu-15, 15-Leu-|-Tyr-16, 16-Tyr-|-Leu-17, 23-Gly-|-Phe-24, 24-Phe-|-Phe-25 and 25-Phe-|-Tyr-26 bonds in the B chain of insulin.. In terms of biological role, shows particularly broad specificity; although bonds involving phenylalanine and leucine are preferred, many others are also cleaved to some extent. This is Pepsin A-3 (PGA3) from Homo sapiens (Human).